The following is a 739-amino-acid chain: Phosphoribosylformylglycinamidine synthase subunit PurL (739 aa).

Residue histidine 54 is part of the active site. 2 residues coordinate ATP: tyrosine 57 and lysine 96. Glutamate 98 serves as a coordination point for Mg(2+). Substrate contacts are provided by residues 99 to 102 (SHNH) and arginine 121. The active-site Proton acceptor is the histidine 100. Aspartate 122 is a Mg(2+) binding site. Glutamine 245 is a substrate binding site. Aspartate 273 lines the Mg(2+) pocket. 317–319 (ESQ) is a binding site for substrate. 2 residues coordinate ATP: aspartate 500 and glycine 537. Position 538 (asparagine 538) interacts with Mg(2+). Residue serine 540 participates in substrate binding.

Belongs to the FGAMS family. In terms of assembly, monomer. Part of the FGAM synthase complex composed of 1 PurL, 1 PurQ and 2 PurS subunits.

The protein localises to the cytoplasm. The catalysed reaction is N(2)-formyl-N(1)-(5-phospho-beta-D-ribosyl)glycinamide + L-glutamine + ATP + H2O = 2-formamido-N(1)-(5-O-phospho-beta-D-ribosyl)acetamidine + L-glutamate + ADP + phosphate + H(+). Its pathway is purine metabolism; IMP biosynthesis via de novo pathway; 5-amino-1-(5-phospho-D-ribosyl)imidazole from N(2)-formyl-N(1)-(5-phospho-D-ribosyl)glycinamide: step 1/2. In terms of biological role, part of the phosphoribosylformylglycinamidine synthase complex involved in the purines biosynthetic pathway. Catalyzes the ATP-dependent conversion of formylglycinamide ribonucleotide (FGAR) and glutamine to yield formylglycinamidine ribonucleotide (FGAM) and glutamate. The FGAM synthase complex is composed of three subunits. PurQ produces an ammonia molecule by converting glutamine to glutamate. PurL transfers the ammonia molecule to FGAR to form FGAM in an ATP-dependent manner. PurS interacts with PurQ and PurL and is thought to assist in the transfer of the ammonia molecule from PurQ to PurL. This is Phosphoribosylformylglycinamidine synthase subunit PurL from Bacillus cereus (strain ATCC 10987 / NRS 248).